The following is a 47-amino-acid chain: Potassium channel toxin alpha-KTx 7.1 (47 aa).

A signal peptide spans 1–12 (RGSVDYKDDDDK). 3 disulfides stabilise this stretch: Cys-16/Cys-37, Cys-22/Cys-42, and Cys-26/Cys-44.

Belongs to the short scorpion toxin superfamily. Potassium channel inhibitor family. Alpha-KTx 07 subfamily. As to expression, expressed by the venom gland.

The protein localises to the secreted. In terms of biological role, potent inhibitor of the A-type voltage-gated potassium channels. Most potent inhibitor of Kv1.2/KCNA2 channels. Reversibly block the Shaker B potassium-channels (Kv1.1 sub-family). This Pandinus imperator (Emperor scorpion) protein is Potassium channel toxin alpha-KTx 7.1 (PTX-1).